Consider the following 321-residue polypeptide: PI-PLC X domain-containing protein 3 (321 aa).

The PI-PLC X-box domain occupies 22–197 (SIHSIPLTNL…DYQVLVFYHS (176 aa)). Catalysis depends on residues His-37 and His-114.

In Bos taurus (Bovine), this protein is PI-PLC X domain-containing protein 3 (PLCXD3).